Here is a 608-residue protein sequence, read N- to C-terminus: Albumin 1 (608 aa).

Residues M1–S14 form the signal peptide. Residues V15–R18 constitute a propeptide that is removed on maturation. Albumin domains follow at residues S19 to H205, A206 to D398, and K402 to S600. Intrachain disulfides connect C26/C72, C71/C80, C93/C108, C107/C118, C142/C187, C186/C195, C218/C264, C263/C271, C283/C299, C298/C309, C336/C381, C380/C389, C414/C460, C459/C471, C484/C500, C499/C510, C537/C582, and C581/C590. An N-linked (GlcNAc...) asparagine glycan is attached at N501.

The protein belongs to the ALB/AFP/VDB family. As to expression, plasma.

Its subcellular location is the secreted. Binds water, Ca(2+), Na(+), K(+), fatty acids, hormones, bilirubin and drugs. Its main function is the regulation of the colloidal osmotic pressure of blood. In Salmo salar (Atlantic salmon), this protein is Albumin 1 (alb1).